The sequence spans 577 residues: Arginine--tRNA ligase (577 aa).

Residues 132-142 carry the 'HIGH' region motif; that stretch reads ANPTGPLHVGH.

This sequence belongs to the class-I aminoacyl-tRNA synthetase family. Monomer.

It localises to the cytoplasm. It catalyses the reaction tRNA(Arg) + L-arginine + ATP = L-arginyl-tRNA(Arg) + AMP + diphosphate. This is Arginine--tRNA ligase from Pelagibacter ubique (strain HTCC1062).